The primary structure comprises 434 residues: Methylenetetrahydrofolate--tRNA-(uracil-5-)-methyltransferase TrmFO (434 aa).

10–15 (GAGLAG) is an FAD binding site.

The protein belongs to the MnmG family. TrmFO subfamily. It depends on FAD as a cofactor.

The protein localises to the cytoplasm. It carries out the reaction uridine(54) in tRNA + (6R)-5,10-methylene-5,6,7,8-tetrahydrofolate + NADH + H(+) = 5-methyluridine(54) in tRNA + (6S)-5,6,7,8-tetrahydrofolate + NAD(+). The catalysed reaction is uridine(54) in tRNA + (6R)-5,10-methylene-5,6,7,8-tetrahydrofolate + NADPH + H(+) = 5-methyluridine(54) in tRNA + (6S)-5,6,7,8-tetrahydrofolate + NADP(+). Its function is as follows. Catalyzes the folate-dependent formation of 5-methyl-uridine at position 54 (M-5-U54) in all tRNAs. This Bacillus cereus (strain ATCC 10987 / NRS 248) protein is Methylenetetrahydrofolate--tRNA-(uracil-5-)-methyltransferase TrmFO.